A 317-amino-acid chain; its full sequence is Glycine--tRNA ligase alpha subunit (317 aa).

The protein belongs to the class-II aminoacyl-tRNA synthetase family. Tetramer of two alpha and two beta subunits.

The protein resides in the cytoplasm. The catalysed reaction is tRNA(Gly) + glycine + ATP = glycyl-tRNA(Gly) + AMP + diphosphate. In Lactococcus lactis subsp. cremoris (strain SK11), this protein is Glycine--tRNA ligase alpha subunit.